The following is an 808-amino-acid chain: MKLSLDWMNDFTPLKEVGLDAILKKIAISVCEIDDATEFRPELDFVKIVRIESLEKHPSADKLQIAQVFDGSSKSQIVTGVTNVKIGDLVPLAIPGAKLGDKEILESELRGVKSSGMLCSEKELFLSEEGNGVWILNGLDQAEVGKTIRSFLYYNDIIFEVDNKSITHRPDLWSHFGFARELASQLRLPIVFNPFESLWNFDLSVKLPKVLENQNAHSYYASSISGVSVFPSKRKFQSRLQKCGVRVINNVVDVSNYVMLEMGQPTHFFDKKFLENQGGISLEVSFAKKGESFALLDETSPALEEEVLLIRNQGKPVAIAGVMGGKESAVQNTTTEIVMESAVFMRERIRKSIRSTGIRSDSSVRYEKGLEATTTLPVIRRALNLLKENGCSELKASEPVGFLHIPHKEVRIHTDIHFINAKLGVTLSQGDITDILERLHFIVSWKGEHLEVLVPKFRHNYDVTIPEDLVEEIGRTKGYDTIQVSPLLAEVKTPIRNLNRELERKCKTFFAIALKYHEVFNYSFQSYKENEFSGDPKLSVKIKNEMPEEQSVLRNSLLPSLLKNTRTNQDRFSEIKIFEFGRVYFNLPEPENEKKIFAFAVSLDKKSSEPDLKLLEEDFLKIKKEVESFLESIQIYEYTWKIQQETIFHPGANLCLVARSGKDGLETIVGNLGYVHPAILDSFELKKRVIYGSFEFERIVELWNQNRKVSRFVTPSQFPEAEIDLSILVGEKENTNVFTDLVKLERIPELKEGWVYSQFMGGNVPEGKKSVSYRFRLVNYERTFTQERIKEISDQLVILAGKNGFVLR.

Positions 40-149 (RPELDFVKIV…DQAEVGKTIR (110 aa)) constitute a tRNA-binding domain. Residues 407 to 484 (HKEVRIHTDI…RTKGYDTIQV (78 aa)) enclose the B5 domain. Mg(2+) is bound by residues Asp-462, Asp-468, Glu-471, and Glu-472. The FDX-ACB domain occupies 716-808 (SQFPEAEIDL…LAGKNGFVLR (93 aa)).

It belongs to the phenylalanyl-tRNA synthetase beta subunit family. Type 1 subfamily. In terms of assembly, tetramer of two alpha and two beta subunits. Requires Mg(2+) as cofactor.

It is found in the cytoplasm. It carries out the reaction tRNA(Phe) + L-phenylalanine + ATP = L-phenylalanyl-tRNA(Phe) + AMP + diphosphate + H(+). This chain is Phenylalanine--tRNA ligase beta subunit, found in Leptospira interrogans serogroup Icterohaemorrhagiae serovar copenhageni (strain Fiocruz L1-130).